The chain runs to 285 residues: 4-diphosphocytidyl-2-C-methyl-D-erythritol kinase (285 aa).

The active site involves K12. Position 95 to 105 (95 to 105 (PVGAGLAGGST)) interacts with ATP. D137 is an active-site residue.

The protein belongs to the GHMP kinase family. IspE subfamily.

The catalysed reaction is 4-CDP-2-C-methyl-D-erythritol + ATP = 4-CDP-2-C-methyl-D-erythritol 2-phosphate + ADP + H(+). It participates in isoprenoid biosynthesis; isopentenyl diphosphate biosynthesis via DXP pathway; isopentenyl diphosphate from 1-deoxy-D-xylulose 5-phosphate: step 3/6. Functionally, catalyzes the phosphorylation of the position 2 hydroxy group of 4-diphosphocytidyl-2C-methyl-D-erythritol. The chain is 4-diphosphocytidyl-2-C-methyl-D-erythritol kinase from Syntrophomonas wolfei subsp. wolfei (strain DSM 2245B / Goettingen).